A 181-amino-acid polypeptide reads, in one-letter code: ATP synthase subunit b, chloroplastic (181 aa).

Residues 28-50 (IINLSVVLGVLIYFGKGVLSNLL) form a helical membrane-spanning segment.

It belongs to the ATPase B chain family. In terms of assembly, F-type ATPases have 2 components, F(1) - the catalytic core - and F(0) - the membrane proton channel. F(1) has five subunits: alpha(3), beta(3), gamma(1), delta(1), epsilon(1). F(0) has four main subunits: a(1), b(1), b'(1) and c(10-14). The alpha and beta chains form an alternating ring which encloses part of the gamma chain. F(1) is attached to F(0) by a central stalk formed by the gamma and epsilon chains, while a peripheral stalk is formed by the delta, b and b' chains.

It localises to the plastid. It is found in the chloroplast thylakoid membrane. Functionally, f(1)F(0) ATP synthase produces ATP from ADP in the presence of a proton or sodium gradient. F-type ATPases consist of two structural domains, F(1) containing the extramembraneous catalytic core and F(0) containing the membrane proton channel, linked together by a central stalk and a peripheral stalk. During catalysis, ATP synthesis in the catalytic domain of F(1) is coupled via a rotary mechanism of the central stalk subunits to proton translocation. Its function is as follows. Component of the F(0) channel, it forms part of the peripheral stalk, linking F(1) to F(0). The protein is ATP synthase subunit b, chloroplastic of Cryptomeria japonica (Japanese cedar).